The chain runs to 753 residues: Translation initiation factor IF-2 (753 aa).

Positions 1–166 (MSEKPRRDTG…PVMRPRGPVA (166 aa)) are disordered. Composition is skewed to low complexity over residues 19–43 (STGQSTNRTSNQQTGTGRTPTATGA), 71–81 (NARPAAPANAR), and 102–122 (TPAPVRGGGATPAPARGTNTR). Positions 133 to 146 (PQPEEREREREAVL) are enriched in basic and acidic residues. Residues 153–162 (TTTRPVMRPR) are compositionally biased toward low complexity. Residues 249 to 418 (PRPPVVTIMG…LLVADLEDLR (170 aa)) form the tr-type G domain. The G1 stretch occupies residues 258–265 (GHVDHGKT). Residue 258-265 (GHVDHGKT) participates in GTP binding. The segment at 283 to 287 (GITQH) is G2. The segment at 304–307 (DTPG) is G3. Residues 304–308 (DTPGH) and 358–361 (NKID) contribute to the GTP site. The interval 358–361 (NKID) is G4. A G5 region spans residues 394–396 (SAR).

It belongs to the TRAFAC class translation factor GTPase superfamily. Classic translation factor GTPase family. IF-2 subfamily.

The protein localises to the cytoplasm. One of the essential components for the initiation of protein synthesis. Protects formylmethionyl-tRNA from spontaneous hydrolysis and promotes its binding to the 30S ribosomal subunits. Also involved in the hydrolysis of GTP during the formation of the 70S ribosomal complex. The chain is Translation initiation factor IF-2 from Chloroflexus aggregans (strain MD-66 / DSM 9485).